The chain runs to 580 residues: 2-hydroxyacyl-CoA lyase 1 (580 aa).

Residue Glu-47 participates in thiamine diphosphate binding. Residues 413–494 form a thiamine pyrophosphate binding region; sequence TMDIGRLCIP…FIVLNNNGVY (82 aa). Positions 463 and 490 each coordinate Mg(2+).

It belongs to the TPP enzyme family. As to quaternary structure, homotetramer. Mg(2+) serves as cofactor. Thiamine diphosphate is required as a cofactor.

The protein localises to the peroxisome. It catalyses the reaction a 2-hydroxy-3-methyl fatty acyl-CoA = a 2-methyl-branched fatty aldehyde + formyl-CoA. It carries out the reaction an (R)-2-hydroxy-long-chain-fatty acyl-CoA = a long-chain fatty aldehyde + formyl-CoA. The enzyme catalyses 2-hydroxy-3-methylhexadecanoyl-CoA = 2-methylpentadecanal + formyl-CoA. The catalysed reaction is 2-hydroxyoctadecanoyl-CoA = heptadecanal + formyl-CoA. Peroxisomal 2-OH acyl-CoA lyase involved in the cleavage (C1 removal) reaction in the fatty acid alpha-oxydation in a thiamine pyrophosphate (TPP)-dependent manner. Involved in the degradation of 3-methyl-branched fatty acids and the shortening of 2-hydroxy long-chain fatty acids. In Dictyostelium discoideum (Social amoeba), this protein is 2-hydroxyacyl-CoA lyase 1 (hacl1).